We begin with the raw amino-acid sequence, 367 residues long: Phospho-N-acetylmuramoyl-pentapeptide-transferase (367 aa).

10 helical membrane passes run glycine 28–leucine 48, threonine 75–leucine 95, threonine 96–isoleucine 116, phenylalanine 134–alanine 154, leucine 175–glycine 195, glycine 206–valine 226, alanine 243–tryptophan 263, phenylalanine 271–isoleucine 291, leucine 295–valine 315, and threonine 344–leucine 364.

Belongs to the glycosyltransferase 4 family. MraY subfamily. The cofactor is Mg(2+).

It localises to the cell inner membrane. The enzyme catalyses UDP-N-acetyl-alpha-D-muramoyl-L-alanyl-gamma-D-glutamyl-meso-2,6-diaminopimeloyl-D-alanyl-D-alanine + di-trans,octa-cis-undecaprenyl phosphate = di-trans,octa-cis-undecaprenyl diphospho-N-acetyl-alpha-D-muramoyl-L-alanyl-D-glutamyl-meso-2,6-diaminopimeloyl-D-alanyl-D-alanine + UMP. Its pathway is cell wall biogenesis; peptidoglycan biosynthesis. Functionally, catalyzes the initial step of the lipid cycle reactions in the biosynthesis of the cell wall peptidoglycan: transfers peptidoglycan precursor phospho-MurNAc-pentapeptide from UDP-MurNAc-pentapeptide onto the lipid carrier undecaprenyl phosphate, yielding undecaprenyl-pyrophosphoryl-MurNAc-pentapeptide, known as lipid I. In Maricaulis maris (strain MCS10) (Caulobacter maris), this protein is Phospho-N-acetylmuramoyl-pentapeptide-transferase.